A 236-amino-acid polypeptide reads, in one-letter code: 2,3,4,5-tetrahydropyridine-2,6-dicarboxylate N-acetyltransferase (236 aa).

Belongs to the transferase hexapeptide repeat family. DapH subfamily.

It carries out the reaction (S)-2,3,4,5-tetrahydrodipicolinate + acetyl-CoA + H2O = L-2-acetamido-6-oxoheptanedioate + CoA. It functions in the pathway amino-acid biosynthesis; L-lysine biosynthesis via DAP pathway; LL-2,6-diaminopimelate from (S)-tetrahydrodipicolinate (acetylase route): step 1/3. Catalyzes the transfer of an acetyl group from acetyl-CoA to tetrahydrodipicolinate. This Listeria innocua serovar 6a (strain ATCC BAA-680 / CLIP 11262) protein is 2,3,4,5-tetrahydropyridine-2,6-dicarboxylate N-acetyltransferase.